The primary structure comprises 2285 residues: Protein Ycf2 (2285 aa).

Residue 1638-1645 coordinates ATP; the sequence is GSIGTGRS.

It belongs to the Ycf2 family.

It localises to the plastid. It is found in the chloroplast stroma. Probable ATPase of unknown function. Its presence in a non-photosynthetic plant (Epifagus virginiana) and experiments in tobacco indicate that it has an essential function which is probably not related to photosynthesis. The sequence is that of Protein Ycf2 from Populus trichocarpa (Western balsam poplar).